Here is an 895-residue protein sequence, read N- to C-terminus: DNA mismatch repair protein MutS (895 aa).

Position 632 to 639 (G632 to S639) interacts with ATP. Residues V824 to Q849 are disordered. Positions N837–Q849 are enriched in polar residues.

This sequence belongs to the DNA mismatch repair MutS family.

Functionally, this protein is involved in the repair of mismatches in DNA. It is possible that it carries out the mismatch recognition step. This protein has a weak ATPase activity. The chain is DNA mismatch repair protein MutS from Desulforapulum autotrophicum (strain ATCC 43914 / DSM 3382 / VKM B-1955 / HRM2) (Desulfobacterium autotrophicum).